The sequence spans 154 residues: Transcriptional repressor NrdR (154 aa).

A disordered region spans residues 1–22 (MRCPFCGNDDTQVKDSRPTEDN). A zinc finger spans residues 3 to 34 (CPFCGNDDTQVKDSRPTEDNSAIRRRRFCPAC). Basic and acidic residues predominate over residues 11 to 22 (TQVKDSRPTEDN). Residues 49–139 (LTVVKSGGSR…VYKDFREVTD (91 aa)) enclose the ATP-cone domain.

Belongs to the NrdR family. Zn(2+) is required as a cofactor.

Its function is as follows. Negatively regulates transcription of bacterial ribonucleotide reductase nrd genes and operons by binding to NrdR-boxes. In Rhodospirillum centenum (strain ATCC 51521 / SW), this protein is Transcriptional repressor NrdR.